Reading from the N-terminus, the 434-residue chain is Trigger factor (434 aa).

The 86-residue stretch at Glu-161 to Pro-246 folds into the PPIase FKBP-type domain.

It belongs to the FKBP-type PPIase family. Tig subfamily.

Its subcellular location is the cytoplasm. The enzyme catalyses [protein]-peptidylproline (omega=180) = [protein]-peptidylproline (omega=0). In terms of biological role, involved in protein export. Acts as a chaperone by maintaining the newly synthesized protein in an open conformation. Functions as a peptidyl-prolyl cis-trans isomerase. This chain is Trigger factor, found in Pectobacterium atrosepticum (strain SCRI 1043 / ATCC BAA-672) (Erwinia carotovora subsp. atroseptica).